The sequence spans 424 residues: Kynureninase (424 aa).

Pyridoxal 5'-phosphate contacts are provided by residues L109, T110, 137–140, D222, H225, and Y247; that span reads FPSD. K248 is subject to N6-(pyridoxal phosphate)lysine. Pyridoxal 5'-phosphate contacts are provided by W278 and N306.

This sequence belongs to the kynureninase family. Homodimer. Requires pyridoxal 5'-phosphate as cofactor.

It carries out the reaction L-kynurenine + H2O = anthranilate + L-alanine + H(+). The catalysed reaction is 3-hydroxy-L-kynurenine + H2O = 3-hydroxyanthranilate + L-alanine + H(+). It functions in the pathway amino-acid degradation; L-kynurenine degradation; L-alanine and anthranilate from L-kynurenine: step 1/1. It participates in cofactor biosynthesis; NAD(+) biosynthesis; quinolinate from L-kynurenine: step 2/3. Its function is as follows. Catalyzes the cleavage of L-kynurenine (L-Kyn) and L-3-hydroxykynurenine (L-3OHKyn) into anthranilic acid (AA) and 3-hydroxyanthranilic acid (3-OHAA), respectively. The sequence is that of Kynureninase from Koribacter versatilis (strain Ellin345).